An 861-amino-acid polypeptide reads, in one-letter code: MATEEAIIRIPPYHYIHVLDQNSNVSRVEVGPKTYIRQDNERVLFAPVRMVTVPPRHYCIVANPVSRDAQSSVLFDVTGQVRLRHADQEIRLAQDPFPLYPGELLEKDITPLQVVLPNTALHLKALLDFEDKNGDKVMAGDEWLFEGPGTYIPQKEVEVVEIIQATVIKQNQALRLRARKECFDRDGKERVTGEEWLVRSVGAYLPAVFEEVLDLVDAVILTEKTALHLRARQNFKDLRGVAHRTGEEWLVTVQDTEAHVPDVYEEVLGVVPITTLGPRHYCVILDPMGPDGKNQLGQKRVVKGEKSFFLQPGERLERGIQDVYVLSEQQGLLLKALQPLEEGEGEEKVAHQAGDRWLIRGPLEYVPSAKVEVVEERQAIPLDQNEGIYVQDVKTGKVRAVIGSTYMLTQDEVLWEKELPSGVEELLNLGHDPLADRGQKGTAKVLQPSAARNKTRVVSYRVPHNAAVQVYDYRAKRARVVFGPELVSLDPEEQFTVLSLSAGRPKRPHARRALCLLLGPDFFTDVITIETADHARLQLQLAYNWHFELKNRNDPEETAKLFSVPDFVGDACKAIASRVRGAVASVTFDDFHKNSARIIRMAVFGFEMSEDAGPDGALLPRARDRAVFPQNGLVVSSVDVQSVEPVDQRTRDALQRSVQLAIEITTNSQEAAAKHEAQRLEQEARGRLERQKILDQSEAEKARKELLELEAMSMAVESTGNAKAEAESRAEAARIEGEGSVLQAKLKAQALAIETEAELERVKKVREMELIYSRAQLELEVSKAQQLADVEAKKFKEMTEALGPGTIRDLAVAGPEMQVKLLQSLGLKSTLITDGSSPINLFNTAFGLLGLGSDGQPPVQK.

Ala2 carries the post-translational modification N-acetylalanine. MVP repeat units follow at residues 2-56 (ATEE…VPPR), 57-111 (HYCI…DITP), 112-164 (LQVV…EIIQ), 165-217 (ATVI…DLVD), 218-272 (AVIL…GVVP), 273-323 (ITTL…IQDV), 324-379 (YVLS…ERQA), 380-457 (IPLD…KTRV), and 458-520 (VSYR…LLGP). Residue Ser421 is modified to Phosphoserine. Residue Lys444 forms a Glycyl lysine isopeptide (Lys-Gly) (interchain with G-Cter in SUMO2) linkage. Residue Lys704 forms a Glycyl lysine isopeptide (Lys-Gly) (interchain with G-Cter in SUMO2) linkage.

The vault ribonucleoprotein particle is a huge (400 A x 670 A) cage structure of 12.9 MDa. It consists of a dimer of half-vaults, with each half-vault comprising 39 identical major vault protein (MVP) chains, PARP4 and one or more vault RNAs (vRNAs). Interacts with PTEN and activated MAPK1. The phosphorylated protein interacts with the SH2 domains of PTPN11 and SRC. Interacts with APEX1. May interact with ZNF540. Interacts with TEP1. In terms of processing, phosphorylated on Tyr residues after EGF stimulation. Dephosphorylated by PTPN11.

The protein resides in the cytoplasm. It is found in the nucleus. In terms of biological role, required for normal vault structure. Vaults are multi-subunit structures that may act as scaffolds for proteins involved in signal transduction. Vaults may also play a role in nucleo-cytoplasmic transport. Down-regulates IFNG-mediated STAT1 signaling and subsequent activation of JAK. Down-regulates SRC activity and signaling through MAP kinases. The polypeptide is Major vault protein (Mvp) (Mus musculus (Mouse)).